The primary structure comprises 40 residues: Large ribosomal subunit protein bL36B (40 aa).

This sequence belongs to the bacterial ribosomal protein bL36 family.

This chain is Large ribosomal subunit protein bL36B, found in Kocuria rhizophila (strain ATCC 9341 / DSM 348 / NBRC 103217 / DC2201).